Here is a 545-residue protein sequence, read N- to C-terminus: CTP synthase (545 aa).

Positions 1–266 (MTTRYIFVTG…DDLVTKRFGL (266 aa)) are amidoligase domain. Ser14 serves as a coordination point for CTP. A UTP-binding site is contributed by Ser14. ATP-binding positions include 15–20 (SLGKGI) and Asp72. The Mg(2+) site is built by Asp72 and Glu140. CTP contacts are provided by residues 147-149 (DIE), 187-192 (KTKPTQ), and Lys223. Residues 187–192 (KTKPTQ) and Lys223 each bind UTP. ATP is bound at residue 239-241 (KDV). The region spanning 291-542 (TIGMVGKYTE…VAAAVAYQKR (252 aa)) is the Glutamine amidotransferase type-1 domain. Gly352 contributes to the L-glutamine binding site. Residue Cys379 is the Nucleophile; for glutamine hydrolysis of the active site. L-glutamine-binding positions include 380 to 383 (LGMQ), Glu403, and Arg470. Residues His515 and Glu517 contribute to the active site.

Belongs to the CTP synthase family. In terms of assembly, homotetramer.

The catalysed reaction is UTP + L-glutamine + ATP + H2O = CTP + L-glutamate + ADP + phosphate + 2 H(+). It catalyses the reaction L-glutamine + H2O = L-glutamate + NH4(+). It carries out the reaction UTP + NH4(+) + ATP = CTP + ADP + phosphate + 2 H(+). The protein operates within pyrimidine metabolism; CTP biosynthesis via de novo pathway; CTP from UDP: step 2/2. With respect to regulation, allosterically activated by GTP, when glutamine is the substrate; GTP has no effect on the reaction when ammonia is the substrate. The allosteric effector GTP functions by stabilizing the protein conformation that binds the tetrahedral intermediate(s) formed during glutamine hydrolysis. Inhibited by the product CTP, via allosteric rather than competitive inhibition. Catalyzes the ATP-dependent amination of UTP to CTP with either L-glutamine or ammonia as the source of nitrogen. Regulates intracellular CTP levels through interactions with the four ribonucleotide triphosphates. This is CTP synthase from Shewanella loihica (strain ATCC BAA-1088 / PV-4).